Consider the following 339-residue polypeptide: Ketol-acid reductoisomerase (NADP(+)) (339 aa).

The KARI N-terminal Rossmann domain maps to 1–182 (MRVYYDRDAD…GGGRSGVIET (182 aa)). NADP(+) contacts are provided by residues 24–27 (YGSQ), Arg-48, Ser-51, Thr-53, and 83–86 (DELQ). His-108 is a catalytic residue. Gly-134 provides a ligand contact to NADP(+). In terms of domain architecture, KARI C-terminal knotted spans 183–328 (TFKEECETDL…GKLRAMMPWI (146 aa)). Mg(2+) is bound by residues Asp-191, Glu-195, Glu-227, and Glu-231. Ser-252 is a binding site for substrate.

Belongs to the ketol-acid reductoisomerase family. The cofactor is Mg(2+).

The enzyme catalyses (2R)-2,3-dihydroxy-3-methylbutanoate + NADP(+) = (2S)-2-acetolactate + NADPH + H(+). The catalysed reaction is (2R,3R)-2,3-dihydroxy-3-methylpentanoate + NADP(+) = (S)-2-ethyl-2-hydroxy-3-oxobutanoate + NADPH + H(+). It participates in amino-acid biosynthesis; L-isoleucine biosynthesis; L-isoleucine from 2-oxobutanoate: step 2/4. The protein operates within amino-acid biosynthesis; L-valine biosynthesis; L-valine from pyruvate: step 2/4. Functionally, involved in the biosynthesis of branched-chain amino acids (BCAA). Catalyzes an alkyl-migration followed by a ketol-acid reduction of (S)-2-acetolactate (S2AL) to yield (R)-2,3-dihydroxy-isovalerate. In the isomerase reaction, S2AL is rearranged via a Mg-dependent methyl migration to produce 3-hydroxy-3-methyl-2-ketobutyrate (HMKB). In the reductase reaction, this 2-ketoacid undergoes a metal-dependent reduction by NADPH to yield (R)-2,3-dihydroxy-isovalerate. In Brucella canis (strain ATCC 23365 / NCTC 10854 / RM-666), this protein is Ketol-acid reductoisomerase (NADP(+)).